The sequence spans 388 residues: Succinate--CoA ligase [ADP-forming] subunit beta (388 aa).

Positions 9-244 (KEIFRSMGVA…LEEEDPKEIE (236 aa)) constitute an ATP-grasp domain. Residues lysine 46, 53 to 55 (GRG), glutamate 99, cysteine 102, and glutamate 107 each bind ATP. Mg(2+) contacts are provided by asparagine 199 and aspartate 213. Substrate-binding positions include asparagine 264 and 321–323 (GIM).

This sequence belongs to the succinate/malate CoA ligase beta subunit family. Heterotetramer of two alpha and two beta subunits. Mg(2+) is required as a cofactor.

It catalyses the reaction succinate + ATP + CoA = succinyl-CoA + ADP + phosphate. The catalysed reaction is GTP + succinate + CoA = succinyl-CoA + GDP + phosphate. It participates in carbohydrate metabolism; tricarboxylic acid cycle; succinate from succinyl-CoA (ligase route): step 1/1. Its function is as follows. Succinyl-CoA synthetase functions in the citric acid cycle (TCA), coupling the hydrolysis of succinyl-CoA to the synthesis of either ATP or GTP and thus represents the only step of substrate-level phosphorylation in the TCA. The beta subunit provides nucleotide specificity of the enzyme and binds the substrate succinate, while the binding sites for coenzyme A and phosphate are found in the alpha subunit. The polypeptide is Succinate--CoA ligase [ADP-forming] subunit beta (Staphylococcus aureus (strain bovine RF122 / ET3-1)).